We begin with the raw amino-acid sequence, 318 residues long: Olfactory receptor 10H1 (318 aa).

Over 1–25 (MQRANHSTVTQFILVGFSVFPHLQL) the chain is Extracellular. N-linked (GlcNAc...) asparagine glycosylation is present at N5. A helical transmembrane segment spans residues 26–46 (MLFLLFLLMYLFTLLGNLLIM). Residues 47–54 (ATVWSERS) are Cytoplasmic-facing. A helical transmembrane segment spans residues 55–75 (LHTPMYLFLCALSVSEILYTV). Topologically, residues 76–99 (AIIPRMLADLLSTQRSIAFLACAS) are extracellular. An intrachain disulfide couples C97 to C189. A helical membrane pass occupies residues 100 to 120 (QMFFSFSFGFTHSFLLTVMGY). Residues 121–139 (DRYVAICHPLRYNVLMSPR) lie on the Cytoplasmic side of the membrane. The helical transmembrane segment at 140–160 (GCACLVGCSWAGGLVMGMVVT) threads the bilayer. Topologically, residues 161–197 (SAIFHLAFCGHKEIHHFACHVPPLLKLACGDDVLVVA) are extracellular. Residues 198–218 (KGVGLVCITALLGCFLLILLS) form a helical membrane-spanning segment. Residues 219–238 (YAFIVAAILKIPSAEGRNKA) lie on the Cytoplasmic side of the membrane. Residues 239–259 (FSTCASHLTVVVVHYGFASVI) traverse the membrane as a helical segment. At 260 to 272 (YLKPKSPQSLEGD) the chain is on the extracellular side. Residues 273–293 (TLMGITYTVLTPFLSPIIFSL) traverse the membrane as a helical segment. The Cytoplasmic segment spans residues 294–318 (RNKELKVAMKKTFFSKLYPEKNVMM).

The protein belongs to the G-protein coupled receptor 1 family.

The protein resides in the cell membrane. In terms of biological role, odorant receptor. The polypeptide is Olfactory receptor 10H1 (OR10H1) (Homo sapiens (Human)).